A 274-amino-acid chain; its full sequence is Diaminopimelate epimerase (274 aa).

Positions 11, 44, and 64 each coordinate substrate. C73 functions as the Proton donor in the catalytic mechanism. Substrate contacts are provided by residues 74 to 75 (GN), N157, N190, and 208 to 209 (ER). Catalysis depends on C217, which acts as the Proton acceptor. 218–219 (GS) serves as a coordination point for substrate.

The protein belongs to the diaminopimelate epimerase family. Homodimer.

It localises to the cytoplasm. It carries out the reaction (2S,6S)-2,6-diaminopimelate = meso-2,6-diaminopimelate. Its pathway is amino-acid biosynthesis; L-lysine biosynthesis via DAP pathway; DL-2,6-diaminopimelate from LL-2,6-diaminopimelate: step 1/1. Catalyzes the stereoinversion of LL-2,6-diaminopimelate (L,L-DAP) to meso-diaminopimelate (meso-DAP), a precursor of L-lysine and an essential component of the bacterial peptidoglycan. The chain is Diaminopimelate epimerase from Enterobacter sp. (strain 638).